A 348-amino-acid polypeptide reads, in one-letter code: Probable dual-specificity RNA methyltransferase RlmN (348 aa).

E95 serves as the catalytic Proton acceptor. A Radical SAM core domain is found at S101–D335. The cysteines at positions 108 and 340 are disulfide-linked. C115, C119, and C122 together coordinate [4Fe-4S] cluster. S-adenosyl-L-methionine is bound by residues G162–E163, S192, S221–H223, and N297. The active-site S-methylcysteine intermediate is C340.

It belongs to the radical SAM superfamily. RlmN family. [4Fe-4S] cluster serves as cofactor.

It localises to the cytoplasm. The catalysed reaction is adenosine(2503) in 23S rRNA + 2 reduced [2Fe-2S]-[ferredoxin] + 2 S-adenosyl-L-methionine = 2-methyladenosine(2503) in 23S rRNA + 5'-deoxyadenosine + L-methionine + 2 oxidized [2Fe-2S]-[ferredoxin] + S-adenosyl-L-homocysteine. It catalyses the reaction adenosine(37) in tRNA + 2 reduced [2Fe-2S]-[ferredoxin] + 2 S-adenosyl-L-methionine = 2-methyladenosine(37) in tRNA + 5'-deoxyadenosine + L-methionine + 2 oxidized [2Fe-2S]-[ferredoxin] + S-adenosyl-L-homocysteine. Functionally, specifically methylates position 2 of adenine 2503 in 23S rRNA and position 2 of adenine 37 in tRNAs. The chain is Probable dual-specificity RNA methyltransferase RlmN from Prochlorococcus marinus (strain SARG / CCMP1375 / SS120).